The chain runs to 192 residues: Type 1 phosphatases regulator YPI2 (192 aa).

Disordered stretches follow at residues 1–53 (MLQR…GKHK) and 65–192 (EFGQ…PVQK). The span at 8–18 (QTSSSTQTETT) shows a compositional bias: low complexity. Over residues 25–49 (RRPETRQKEDSKVKWTEDVIDNEHM) the composition is skewed to basic and acidic residues. Over residues 69 to 79 (SSDESSDSSSD) the composition is skewed to low complexity. Positions 86–103 (YERNNDFDQNHRHSHNFD) are enriched in basic and acidic residues. Residues 134 to 148 (KGNTGMSKPSSSSPD) are compositionally biased toward polar residues. Positions 157 to 169 (IHKRNKKVRKPKR) are enriched in basic residues.

Belongs to the YPI1 family.

The protein localises to the nucleus. Functionally, regulator of type 1 phosphatases which maintains protein phosphatase activity under strict control. This chain is Type 1 phosphatases regulator YPI2 (YPI2), found in Scheffersomyces stipitis (strain ATCC 58785 / CBS 6054 / NBRC 10063 / NRRL Y-11545) (Yeast).